The primary structure comprises 162 residues: Phenazine biosynthesis protein PhzA2 (162 aa).

This sequence belongs to the PhzA/PhzB family.

The protein operates within antibiotic biosynthesis; phenazine biosynthesis. Its function is as follows. Involved in the biosynthesis of the antibiotic phenazine, a nitrogen-containing heterocyclic molecule having important roles in virulence, competition and biological control. PhzA2 (operon phzA2B2C2E2F2G2) has a role in the biosynthesis of the phenazine during both planktonic growth and biofilm development, and in host infection during biofilm development. This Pseudomonas aeruginosa (strain ATCC 15692 / DSM 22644 / CIP 104116 / JCM 14847 / LMG 12228 / 1C / PRS 101 / PAO1) protein is Phenazine biosynthesis protein PhzA2.